The following is a 26-amino-acid chain: Cytochrome c oxidase subunit 2 (26 aa).

The protein belongs to the cytochrome c oxidase subunit 2 family. In terms of assembly, component of the cytochrome c oxidase (complex IV, CIV), a multisubunit enzyme composed of a catalytic core of 3 subunits and several supernumerary subunits. The complex exists as a monomer or a dimer and forms supercomplexes (SCs) in the inner mitochondrial membrane with ubiquinol-cytochrome c oxidoreductase (cytochrome b-c1 complex, complex III, CIII). Cu cation is required as a cofactor.

It is found in the mitochondrion inner membrane. The catalysed reaction is 4 Fe(II)-[cytochrome c] + O2 + 8 H(+)(in) = 4 Fe(III)-[cytochrome c] + 2 H2O + 4 H(+)(out). In terms of biological role, component of the cytochrome c oxidase, the last enzyme in the mitochondrial electron transport chain which drives oxidative phosphorylation. The respiratory chain contains 3 multisubunit complexes succinate dehydrogenase (complex II, CII), ubiquinol-cytochrome c oxidoreductase (cytochrome b-c1 complex, complex III, CIII) and cytochrome c oxidase (complex IV, CIV), that cooperate to transfer electrons derived from NADH and succinate to molecular oxygen, creating an electrochemical gradient over the inner membrane that drives transmembrane transport and the ATP synthase. Cytochrome c oxidase is the component of the respiratory chain that catalyzes the reduction of oxygen to water. Electrons originating from reduced cytochrome c in the intermembrane space (IMS) are transferred via the dinuclear copper A center (CU(A)) of subunit 2 and heme A of subunit 1 to the active site in subunit 1, a binuclear center (BNC) formed by heme A3 and copper B (CU(B)). The BNC reduces molecular oxygen to 2 water molecules using 4 electrons from cytochrome c in the IMS and 4 protons from the mitochondrial matrix. The protein is Cytochrome c oxidase subunit 2 (COX2) of Solanum tuberosum (Potato).